Here is a 512-residue protein sequence, read N- to C-terminus: UDP-N-acetylmuramoyl-L-alanyl-D-glutamate--2,6-diaminopimelate ligase (512 aa).

Ser-32 is a UDP-N-acetyl-alpha-D-muramoyl-L-alanyl-D-glutamate binding site. 114 to 120 (GTNGKTT) is an ATP binding site. UDP-N-acetyl-alpha-D-muramoyl-L-alanyl-D-glutamate contacts are provided by residues 156 to 157 (TT), Ser-183, and Arg-191. Residue Lys-223 is modified to N6-carboxylysine. Meso-2,6-diaminopimelate contacts are provided by residues Arg-395, 419–422 (DNPR), Gly-469, and Glu-473. The Meso-diaminopimelate recognition motif motif lies at 419-422 (DNPR).

This sequence belongs to the MurCDEF family. MurE subfamily. The cofactor is Mg(2+). In terms of processing, carboxylation is probably crucial for Mg(2+) binding and, consequently, for the gamma-phosphate positioning of ATP.

The protein localises to the cytoplasm. It catalyses the reaction UDP-N-acetyl-alpha-D-muramoyl-L-alanyl-D-glutamate + meso-2,6-diaminopimelate + ATP = UDP-N-acetyl-alpha-D-muramoyl-L-alanyl-gamma-D-glutamyl-meso-2,6-diaminopimelate + ADP + phosphate + H(+). The protein operates within cell wall biogenesis; peptidoglycan biosynthesis. In terms of biological role, catalyzes the addition of meso-diaminopimelic acid to the nucleotide precursor UDP-N-acetylmuramoyl-L-alanyl-D-glutamate (UMAG) in the biosynthesis of bacterial cell-wall peptidoglycan. This chain is UDP-N-acetylmuramoyl-L-alanyl-D-glutamate--2,6-diaminopimelate ligase, found in Chlorobium phaeobacteroides (strain DSM 266 / SMG 266 / 2430).